The following is a 379-amino-acid chain: Cytochrome b (379 aa).

4 helical membrane passes run 33 to 53, 77 to 98, 113 to 133, and 178 to 198; these read FGSLLGICLGLQIITGLFLAM, WLIRYLHANGASMFFILLYLHI, WNIGILLLFAVMATAFMGYVL, and FFAFHFILPFIIPALVMIHFF. His83 and His97 together coordinate heme b. Positions 182 and 196 each coordinate heme b. Residue His201 coordinates a ubiquinone. 4 helical membrane-spanning segments follow: residues 226–246, 288–308, 320–340, and 347–367; these read IKDIMGLLIMMLALMSLVLFS, LGGVLALVLSILVLALFPMLH, FSQCLLWMLTANLFILTWIGG, and YITIGQLASINYFFTILIVSR.

It belongs to the cytochrome b family. As to quaternary structure, the cytochrome bc1 complex contains 11 subunits: 3 respiratory subunits (MT-CYB, CYC1 and UQCRFS1), 2 core proteins (UQCRC1 and UQCRC2) and 6 low-molecular weight proteins (UQCRH/QCR6, UQCRB/QCR7, UQCRQ/QCR8, UQCR10/QCR9, UQCR11/QCR10 and a cleavage product of UQCRFS1). This cytochrome bc1 complex then forms a dimer. It depends on heme b as a cofactor.

It localises to the mitochondrion inner membrane. Functionally, component of the ubiquinol-cytochrome c reductase complex (complex III or cytochrome b-c1 complex) that is part of the mitochondrial respiratory chain. The b-c1 complex mediates electron transfer from ubiquinol to cytochrome c. Contributes to the generation of a proton gradient across the mitochondrial membrane that is then used for ATP synthesis. In Dolichotis patagonum (Patagonian mara), this protein is Cytochrome b (MT-CYB).